Consider the following 426-residue polypeptide: MLPLIIFVLLCGFYTSWNIGANDVANAVGPSVGSGVLTLRQAVVIAAIFEFFGALLLGDRVAGTIESSIVSVTNPMIASGDYMYGMTAALLATGVWLQLASFFGWPVSTTHSIVGAVIGFGLVLGKGTIIYWNSVGIILISWILSPFMGGCVAYLIFSFIRRHIFYKNDPVLAMVRVAPFLAALVIMTLGTVMISGGVILKVSSTPWAVSGVLVCGLLSYIITFYYVHTKHCSYISDTPKKGSLTYRLKERGGNYGRKYLVVERIFAYLQIIVACFMAFAHGSNDVANAIAPVAGVLRQAYPASYTSYTLIRLMAFGGIGLVIGLAIWGWRVIETVGCKITELTPSRGFSVGMGSALTIALASILGLPISTTHVVVGAVLGIGLARGIRAINLNIIKDIVLSWFITLPAGALLSILFFFALRALFH.

Helical transmembrane passes span 1–21 (MLPL…NIGA), 42–62 (AVVI…DRVA), 87–107 (TAAL…GWPV), 112–132 (SIVG…IIYW), 137–157 (IILI…YLIF), 180–200 (FLAA…GVIL), 207–227 (WAVS…FYYV), 260–280 (LVVE…MAFA), 313–333 (LMAF…WRVI), 364–384 (ILGL…GIGL), and 399–419 (IVLS…LFFF).

This sequence belongs to the inorganic phosphate transporter (PiT) (TC 2.A.20) family.

It is found in the cell membrane. Functionally, potential transporter for phosphate. This Chlamydia pneumoniae (Chlamydophila pneumoniae) protein is Putative phosphate permease CPn_0680/CP_0067/CPj0680/CpB0707.